A 164-amino-acid chain; its full sequence is MNPRRKQRLAVVGIIGFLIVSAVGLMLYALNDSIDLFYTPSEIIEGKNGQKPQIGQRLRIGGMVVPGSVSRDSESLAVSFDLIDTGPTVTVTYTGILPDLFREGQGIVATGVLTDVGAIKAQEVLAKHDEEYMPPELAEKMKGIKHVKPENMPTYESSNGAGSK.

Residues 1–8 (MNPRRKQR) lie on the Cytoplasmic side of the membrane. Residues 9 to 29 (LAVVGIIGFLIVSAVGLMLYA) form a helical; Signal-anchor for type II membrane protein membrane-spanning segment. At 30–164 (LNDSIDLFYT…YESSNGAGSK (135 aa)) the chain is on the periplasmic side. Positions 128 and 132 each coordinate heme. Positions 142 to 164 (KGIKHVKPENMPTYESSNGAGSK) are disordered. Over residues 154 to 164 (TYESSNGAGSK) the composition is skewed to polar residues.

This sequence belongs to the CcmE/CycJ family.

The protein resides in the cell inner membrane. Its function is as follows. Heme chaperone required for the biogenesis of c-type cytochromes. Transiently binds heme delivered by CcmC and transfers the heme to apo-cytochromes in a process facilitated by CcmF and CcmH. The chain is Cytochrome c-type biogenesis protein CcmE from Alteromonas mediterranea (strain DSM 17117 / CIP 110805 / LMG 28347 / Deep ecotype).